We begin with the raw amino-acid sequence, 57 residues long: Putative secreted protein MT0250 (57 aa).

Positions 1–32 (MNRIVAPAAASVVVGLLLGAAAIFGVTLMVQQ) are cleaved as a signal peptide. The tract at residues 34–57 (KKPPLPGGDPSSSVLNRVEYGNRS) is disordered.

The polypeptide is Putative secreted protein MT0250 (Mycobacterium tuberculosis (strain CDC 1551 / Oshkosh)).